We begin with the raw amino-acid sequence, 383 residues long: Probable assembly chaperone of rpl4 (383 aa).

Over residues Met-1–Ser-12 the composition is skewed to basic residues. The segment at Met-1–Glu-33 is disordered. TPR repeat units follow at residues Pro-35–Asn-68, Leu-73–Gly-106, Ala-116–Ile-147, and Pro-193–Leu-226. The tract at residues Asn-345–Ser-383 is disordered. The span at Glu-350 to Ser-374 shows a compositional bias: acidic residues.

It belongs to the ACL4 family.

The protein localises to the cytoplasm. Its subcellular location is the nucleus. Functionally, acts as a chaperone for the L4 ribosomal subunit, required for hierarchical ribosome assembly. Shields ribosomal protein L4 until timely release and insertion into the pre-ribosome is possible, once ribosomal protein L18 is present. The chain is Probable assembly chaperone of rpl4 from Emericella nidulans (strain FGSC A4 / ATCC 38163 / CBS 112.46 / NRRL 194 / M139) (Aspergillus nidulans).